Consider the following 477-residue polypeptide: Beta-agarase D (477 aa).

The first 20 residues, 1–20 (MKRSILLAIIAFLQFFTSYG), serve as a signal peptide directing secretion. The region spanning 22–378 (YDWDNVPIPA…WIRVYKPVNA (357 aa)) is the GH16 domain. Substrate-binding positions include 94-104 (MQNHVAVSGGN), 123-125 (NNT), E174, E179, R206, and E340. E174 functions as the Nucleophile in the catalytic mechanism. The active-site Proton donor is the E179. Low complexity predominate over residues 382 to 391 (NSAETTSTVE). Residues 382–402 (NSAETTSTVEKPASFEPQGQP) are disordered.

The protein belongs to the glycosyl hydrolase 16 family.

It is found in the secreted. The catalysed reaction is Hydrolysis of (1-&gt;4)-beta-D-galactosidic linkages in agarose, giving the tetramer as the predominant product.. Its function is as follows. Cleaves the beta-1,4-linkages between beta-D-galactose and alpha-L-3,6-anhydro-galactose residues in agarose. Cleaves agarose in a random manner with retention of the anomeric-bond configuration, producing beta-anomers that give rise progressively to alpha-anomers when mutarotation takes place. Requires at least 4 consecutive agarose units and is highly intolerant to modifications. The polypeptide is Beta-agarase D (agaD) (Zobellia galactanivorans (strain DSM 12802 / CCUG 47099 / CIP 106680 / NCIMB 13871 / Dsij)).